A 258-amino-acid polypeptide reads, in one-letter code: Tryptophan synthase alpha chain (258 aa).

Residues Glu-47 and Asp-58 each act as proton acceptor in the active site.

This sequence belongs to the TrpA family. In terms of assembly, tetramer of two alpha and two beta chains.

It catalyses the reaction (1S,2R)-1-C-(indol-3-yl)glycerol 3-phosphate + L-serine = D-glyceraldehyde 3-phosphate + L-tryptophan + H2O. It functions in the pathway amino-acid biosynthesis; L-tryptophan biosynthesis; L-tryptophan from chorismate: step 5/5. Functionally, the alpha subunit is responsible for the aldol cleavage of indoleglycerol phosphate to indole and glyceraldehyde 3-phosphate. The chain is Tryptophan synthase alpha chain from Bacillus cereus (strain AH820).